The sequence spans 62 residues: Pro-MCH variant (62 aa).

An NGE-like region spans residues 23 to 41 (GSVAFPAENGVQDTESTQE). A disordered region spans residues 29–62 (AENGVQDTESTQEKRETGDEENSAKFPIGRRDFD). An NEI-like region spans residues 44–56 (ETGDEENSAKFPI). The interval 60–62 (DFD) is melanin-concentrating hormone-like.

The protein belongs to the melanin-concentrating hormone family.

This chain is Pro-MCH variant (PMCHL1), found in Pan paniscus (Pygmy chimpanzee).